The sequence spans 553 residues: Serine/threonine-protein kinase WNG2 (553 aa).

Disordered regions lie at residues 1-20 and 88-107; these read MMFP…RLQR and NREP…GGAE. The N-terminal stretch at 1–64 is a signal peptide; it reads MMFPAVAAPP…GLSWVSVAVA (64 aa). Positions 125–395 constitute a Protein kinase domain; that stretch reads FKQLRPVDEF…IGEVMEDPFF (271 aa). Residue K186 coordinates ATP. The active-site Proton acceptor is the D278. A disordered region spans residues 432–553; the sequence is REKADAAAKA…GFNKEDAQES (122 aa). Residues 438-451 are compositionally biased toward low complexity; it reads AAKAADNAEVPAAK. Composition is skewed to basic and acidic residues over residues 465–486, 494–524, and 531–553; these read GDRD…EKGR, EGNH…ENRE, and QREE…AQES.

Belongs to the protein kinase superfamily. STE Ser/Thr protein kinase family. WNG subfamily. Requires Mg(2+) as cofactor.

It localises to the cytoplasmic granule. Its subcellular location is the secreted. The protein resides in the parasitophorous vacuole lumen. The catalysed reaction is L-seryl-[protein] + ATP = O-phospho-L-seryl-[protein] + ADP + H(+). It catalyses the reaction L-threonyl-[protein] + ATP = O-phospho-L-threonyl-[protein] + ADP + H(+). Its function is as follows. Probable serine/threonine-protein kinase. This Toxoplasma gondii protein is Serine/threonine-protein kinase WNG2.